We begin with the raw amino-acid sequence, 59 residues long: UPF0509 protein KPK_3153 (59 aa).

Belongs to the UPF0509 family.

This Klebsiella pneumoniae (strain 342) protein is UPF0509 protein KPK_3153.